Here is a 787-residue protein sequence, read N- to C-terminus: Protein FAM149A (787 aa).

Disordered stretches follow at residues 22 to 105 (SPAV…SSGA), 144 to 175 (GSNS…APGP), 189 to 226 (EEWT…PTNF), 238 to 284 (ASES…SWRD), 432 to 455 (DGDE…GLPP), 573 to 602 (LQQR…ASSR), and 665 to 697 (AVQT…SYRG). Over residues 37-46 (SVDSGASTSL) the composition is skewed to polar residues. Low complexity-rich tracts occupy residues 51–65 (TLTL…TAAS) and 96–105 (SGSLPSSSGA). The segment covering 144-155 (GSNSVTASSPRN) has biased composition (polar residues). Acidic residues predominate over residues 189-200 (EEWTSDSDSQDD). Over residues 201 to 220 (PEGRGLSEGLRKQSSEKSKD) the composition is skewed to basic and acidic residues. Residues 239-250 (SESPSSFSSSGS) show a composition bias toward low complexity. Positions 251–261 (RTPTEAHNSWP) are enriched in polar residues. Positions 262–274 (GSSTQSSTTGLST) are enriched in low complexity.

This sequence belongs to the FAM149 family.

This Mus musculus (Mouse) protein is Protein FAM149A (Fam149a).